The primary structure comprises 207 residues: Dephospho-CoA kinase (207 aa).

Positions 5-202 (VVGLTGGIGS…LQYLKLSAEK (198 aa)) constitute a DPCK domain. 13–18 (GSGKST) serves as a coordination point for ATP.

The protein belongs to the CoaE family.

It is found in the cytoplasm. The enzyme catalyses 3'-dephospho-CoA + ATP = ADP + CoA + H(+). It participates in cofactor biosynthesis; coenzyme A biosynthesis; CoA from (R)-pantothenate: step 5/5. Its function is as follows. Catalyzes the phosphorylation of the 3'-hydroxyl group of dephosphocoenzyme A to form coenzyme A. This Dechloromonas aromatica (strain RCB) protein is Dephospho-CoA kinase.